Consider the following 157-residue polypeptide: UPF0262 protein Avi_0642 (157 aa).

The protein belongs to the UPF0262 family.

In Allorhizobium ampelinum (strain ATCC BAA-846 / DSM 112012 / S4) (Agrobacterium vitis (strain S4)), this protein is UPF0262 protein Avi_0642.